The primary structure comprises 386 residues: Lipoyl synthase, mitochondrial (386 aa).

Residues M1–L21 constitute a mitochondrion transit peptide. Residues C107, C112, C118, C137, C141, C144, and S352 each coordinate [4Fe-4S] cluster. Residues K122–L341 form the Radical SAM core domain.

It belongs to the radical SAM superfamily. Lipoyl synthase family. It depends on [4Fe-4S] cluster as a cofactor.

The protein resides in the mitochondrion. The catalysed reaction is [[Fe-S] cluster scaffold protein carrying a second [4Fe-4S](2+) cluster] + N(6)-octanoyl-L-lysyl-[protein] + 2 oxidized [2Fe-2S]-[ferredoxin] + 2 S-adenosyl-L-methionine + 4 H(+) = [[Fe-S] cluster scaffold protein] + N(6)-[(R)-dihydrolipoyl]-L-lysyl-[protein] + 4 Fe(3+) + 2 hydrogen sulfide + 2 5'-deoxyadenosine + 2 L-methionine + 2 reduced [2Fe-2S]-[ferredoxin]. Its pathway is protein modification; protein lipoylation via endogenous pathway; protein N(6)-(lipoyl)lysine from octanoyl-[acyl-carrier-protein]: step 2/2. Its function is as follows. Catalyzes the radical-mediated insertion of two sulfur atoms into the C-6 and C-8 positions of the octanoyl moiety bound to the lipoyl domains of lipoate-dependent enzymes, thereby converting the octanoylated domains into lipoylated derivatives. The sequence is that of Lipoyl synthase, mitochondrial (LAB5) from Candida albicans (strain SC5314 / ATCC MYA-2876) (Yeast).